A 65-amino-acid polypeptide reads, in one-letter code: Pancreatic polypeptide prohormone (65 aa).

A Tyrosine amide modification is found at Tyr36. Residues 59–65 constitute a propeptide that is removed on maturation; that stretch reads ELSPMGA.

The protein belongs to the NPY family.

Its subcellular location is the secreted. Functionally, hormone secreted by pancreatic cells that acts as a regulator of pancreatic and gastrointestinal functions probably by signaling through the G protein-coupled receptor NPY4R2. The chain is Pancreatic polypeptide prohormone (PPY) from Sus scrofa (Pig).